A 230-amino-acid polypeptide reads, in one-letter code: Large ribosomal subunit protein uL1 (230 aa).

It belongs to the universal ribosomal protein uL1 family. In terms of assembly, part of the 50S ribosomal subunit.

In terms of biological role, binds directly to 23S rRNA. The L1 stalk is quite mobile in the ribosome, and is involved in E site tRNA release. Functionally, protein L1 is also a translational repressor protein, it controls the translation of the L11 operon by binding to its mRNA. The chain is Large ribosomal subunit protein uL1 from Bifidobacterium longum subsp. infantis (strain ATCC 15697 / DSM 20088 / JCM 1222 / NCTC 11817 / S12).